The chain runs to 57 residues: Large ribosomal subunit protein bL32 (57 aa).

Belongs to the bacterial ribosomal protein bL32 family.

The polypeptide is Large ribosomal subunit protein bL32 (Mycolicibacterium gilvum (strain PYR-GCK) (Mycobacterium gilvum (strain PYR-GCK))).